We begin with the raw amino-acid sequence, 110 residues long: Movement protein TGB2 (110 aa).

Over 1-10 (MSGAHHLTPP) the chain is Cytoplasmic. Residues 11-34 (TDYGKPVLAASIGISLALLVYTAT) traverse the membrane as a helical segment. Over 35–76 (RSTLPHVGDNLHALPHGGRYVDGTKSISYFSPSASKTRDPFP) the chain is Lumenal. The chain crosses the membrane as a helical span at residues 77–92 (FAFLLILTLSGLILLL). The Cytoplasmic segment spans residues 93–110 (SRRRSNPHSCPSCGTPHA).

This sequence belongs to the Tymovirales TGBp2 protein family.

The protein resides in the host endoplasmic reticulum membrane. Plays a role in viral cell-to-cell propagation, by facilitating genome transport to neighboring plant cells through plasmosdesmata,. The chain is Movement protein TGB2 from Plantago asiatica (P1AMV).